The following is a 470-amino-acid chain: MAGENHQWQGSILYNMLMSAKQTRAAPEAPETRLVDQCWGCSCGDEPGVGREGLLGGRNVALLYRCCFCGKDHPRQGSILYSMLTSAKQTYAAPKAPEATLGPCWGCSCGSDPGVGRAGLPGGRPVALLYRCCFCGEDHPRQGSILYSLLTSSKQTHVAPAAPEARPGGAWWDRSYFAQRPGGKEALPGGRATALLYRCCFCGEDHPQQGSTLYCVPTSTNQAQAAPEERPRAPWWDTSSGALRPVALKSPQVVCEAASAGLLKTLRFVKYLPCFQVLPLDQQLVLVRNCWASLLMLELAQDRLQFETVEVSEPSMLQKILTTRRRETGGNEPLPVPTLQHHLAPPAEARKVPSASQVQAIKCFLSKCWSLNISTKEYAYLKGTVLFNPDVPGLQCVKYIQGLQWGTQQILSEHTRMTHQGPHDRFIELNSTLFLLRFINANVIAELFFRPIIGTVSMDDMMLEMLCTKI.

A run of 3 repeats spans residues 1 to 67 (MAGE…YRCC), 68 to 133 (FCGK…YRCC), and 134 to 200 (FCGE…YRCC). Residues 1 to 253 (MAGENHQWQG…RPVALKSPQV (253 aa)) are 4 X 67 AA tandem repeats. 3 consecutive short sequence motifs (LXXLL motif) follow at residues 13 to 17 (LYNML), 80 to 84 (LYSML), and 146 to 150 (LYSLL). Residues 201–253 (FCGEDHPQQGSTLYCVPTSTNQAQAAPEERPRAPWWDTSSGALRPVALKSPQV) form a 4; truncated repeat. Residues 205-469 (DHPQQGSTLY…DMMLEMLCTK (265 aa)) form the NR LBD domain. The AF-2 motif signature appears at 461–466 (MMLEML).

Belongs to the nuclear hormone receptor family. NR0 subfamily. As to quaternary structure, homodimer. Interacts with NR5A1, NR5A2, NR0B2 and with COPS2. Interacts with ESRRB; represses ESRRB activity at the GATA6 promoter.

It is found in the nucleus. The protein localises to the cytoplasm. In terms of biological role, nuclear receptor that lacks a DNA-binding domain and acts as a corepressor that inhibits the transcriptional activity of other nuclear receptors through heterodimeric interactions. Component of a cascade required for the development of the hypothalamic-pituitary-adrenal-gonadal axis. May also have a role in the development of the embryo and in the maintenance of embryonic stem cell pluripotency. This is Nuclear receptor subfamily 0 group B member 1 (NR0B1) from Homo sapiens (Human).